The following is a 262-amino-acid chain: Zinc import ATP-binding protein ZnuC (262 aa).

In terms of domain architecture, ABC transporter spans 5–220 (VSLEQLCVEF…PSYIALFGNA (216 aa)). Position 37–44 (37–44 (GPNGAGKS)) interacts with ATP. Positions 236–262 (HHDLSGSPVSGDATSCSNHNHGHHHHD) are disordered.

Belongs to the ABC transporter superfamily. Zinc importer (TC 3.A.1.15.5) family. The complex is composed of two ATP-binding proteins (ZnuC), two transmembrane proteins (ZnuB) and a solute-binding protein (ZnuA).

The protein localises to the cell inner membrane. It carries out the reaction Zn(2+)(out) + ATP(in) + H2O(in) = Zn(2+)(in) + ADP(in) + phosphate(in) + H(+)(in). Functionally, part of the ABC transporter complex ZnuABC involved in zinc import. Responsible for energy coupling to the transport system. This chain is Zinc import ATP-binding protein ZnuC, found in Vibrio parahaemolyticus serotype O3:K6 (strain RIMD 2210633).